The chain runs to 270 residues: DNA packaging protein OPG160 (270 aa).

ATP is bound at residue 55–62 (VYNPDYDG).

It belongs to the orthopoxvirus OPG160 protein family. As to quaternary structure, interacts with protein OPG137.

Participates in viral DNA packaging and virion morphogenesis. This chain is DNA packaging protein OPG160 (OPG160), found in Homo sapiens (Human).